The primary structure comprises 25 residues: Non-specific lipid-transfer protein 3 (25 aa).

In terms of tissue distribution, seeds (at protein level).

In terms of biological role, plant non-specific lipid-transfer proteins transfer phospholipids as well as galactolipids across membranes. May play a role in wax or cutin deposition in the cell walls of expanding epidermal cells and certain secretory tissues. Has antibacterial and antifungal activity. Displays antibacterial activity towards both Gram-negative bacteria, P.carotovorum (IC(50)=11.5 uM) and P.syringae (IC(50)=12.0 uM), and Gram-positive bacterium C.michiganensis subsp michiganense (IC(50)=11.2 uM). Also displays antifungal activity towards A.niger VKM F-33 (IC(50)=1.05 uM) and B.cinerea TSKHA (IC(50)=1.88 uM) and relatively moderate activity towards B.sorokiniana VKM F-1448 (IC(50)=1.55 uM). Displays some inhibitory activity towards P.infestans OSV12. In Nigella sativa (Black cumin), this protein is Non-specific lipid-transfer protein 3.